Reading from the N-terminus, the 83-residue chain is Small ribosomal subunit protein uS17 (83 aa).

Belongs to the universal ribosomal protein uS17 family. As to quaternary structure, part of the 30S ribosomal subunit.

Functionally, one of the primary rRNA binding proteins, it binds specifically to the 5'-end of 16S ribosomal RNA. This chain is Small ribosomal subunit protein uS17, found in Campylobacter curvus (strain 525.92).